A 249-amino-acid chain; its full sequence is Probable transcriptional regulatory protein mll3945 (249 aa).

Belongs to the TACO1 family.

The protein resides in the cytoplasm. In Mesorhizobium japonicum (strain LMG 29417 / CECT 9101 / MAFF 303099) (Mesorhizobium loti (strain MAFF 303099)), this protein is Probable transcriptional regulatory protein mll3945.